A 1196-amino-acid polypeptide reads, in one-letter code: ATP-dependent helicase/deoxyribonuclease subunit B (1196 aa).

The [4Fe-4S] cluster site is built by Cys823, Cys1149, Cys1152, and Cys1158.

Belongs to the helicase family. AddB/RexB type 2 subfamily. Heterodimer of AddA and RexB. Mg(2+) is required as a cofactor. [4Fe-4S] cluster serves as cofactor.

In terms of biological role, the heterodimer acts as both an ATP-dependent DNA helicase and an ATP-dependent, dual-direction single-stranded exonuclease. Recognizes the chi site generating a DNA molecule suitable for the initiation of homologous recombination. This subunit has 5' -&gt; 3' nuclease activity but not helicase activity. The protein is ATP-dependent helicase/deoxyribonuclease subunit B of Enterococcus faecalis (strain ATCC 700802 / V583).